The sequence spans 425 residues: Adenylosuccinate synthetase (425 aa).

GTP contacts are provided by residues G12–K18 and G40–T42. The Proton acceptor role is filled by D13. Mg(2+) is bound by residues D13 and G40. IMP-binding positions include D13–K16, N38–H41, T130, R144, Q224, T239, and R301. The active-site Proton donor is the H41. Residue T297–R303 participates in substrate binding. GTP contacts are provided by residues R303, K329–D331, and S411–S413.

This sequence belongs to the adenylosuccinate synthetase family. As to quaternary structure, homodimer. It depends on Mg(2+) as a cofactor.

The protein resides in the cytoplasm. It carries out the reaction IMP + L-aspartate + GTP = N(6)-(1,2-dicarboxyethyl)-AMP + GDP + phosphate + 2 H(+). It functions in the pathway purine metabolism; AMP biosynthesis via de novo pathway; AMP from IMP: step 1/2. Functionally, plays an important role in the de novo pathway of purine nucleotide biosynthesis. Catalyzes the first committed step in the biosynthesis of AMP from IMP. This chain is Adenylosuccinate synthetase, found in Wolbachia pipientis wMel.